The chain runs to 562 residues: Eukaryotic translation initiation factor 3 subunit L (562 aa).

A PCI domain is found at 329-535; that stretch reads DAIRVFANIL…IHIADTKVAR (207 aa).

Belongs to the eIF-3 subunit L family. As to quaternary structure, component of the eukaryotic translation initiation factor 3 (eIF-3) complex, which is composed of 13 subunits: eif3a, eif3b, eif3c, eif3d, eif3e, eif3f, eif3g, eif3h, eif3i, eif3j, eif3k, eif3l and eif3m.

The protein localises to the cytoplasm. Its function is as follows. Component of the eukaryotic translation initiation factor 3 (eIF-3) complex, which is involved in protein synthesis of a specialized repertoire of mRNAs and, together with other initiation factors, stimulates binding of mRNA and methionyl-tRNAi to the 40S ribosome. The eIF-3 complex specifically targets and initiates translation of a subset of mRNAs involved in cell proliferation. This Xenopus tropicalis (Western clawed frog) protein is Eukaryotic translation initiation factor 3 subunit L (eif3l).